A 60-amino-acid chain; its full sequence is Protein YmjC (60 aa).

Residues 40 to 60 form a disordered region; the sequence is HKPYPTNKMQTTSGKKVIQDR.

The polypeptide is Protein YmjC (ymjC) (Escherichia coli (strain K12)).